The chain runs to 129 residues: Small ribosomal subunit protein uS11 (129 aa).

It belongs to the universal ribosomal protein uS11 family. In terms of assembly, part of the 30S ribosomal subunit. Interacts with proteins S7 and S18. Binds to IF-3.

In terms of biological role, located on the platform of the 30S subunit, it bridges several disparate RNA helices of the 16S rRNA. Forms part of the Shine-Dalgarno cleft in the 70S ribosome. In Rhodopseudomonas palustris (strain HaA2), this protein is Small ribosomal subunit protein uS11.